The chain runs to 333 residues: Acetyltransferase Pat (333 aa).

3',5'-cyclic AMP is bound by residues 88-91 (GEIA), 98-99 (RS), and R138. One can recognise an N-acetyltransferase domain in the interval 156–318 (LMLRPVLPGD…GELSLGREMV (163 aa)). Substrate is bound at residue H173. D214 is a binding site for Mg(2+). Substrate is bound by residues 238 to 240 (FTV), 246 to 251 (GRGIGS), N277, and R286.

As to quaternary structure, homodimer. It depends on Mg(2+) as a cofactor.

With respect to regulation, autoinhibited and allosterically activated by 3,5-cyclic adenosine monophosphate (cAMP). An extensive conformational rearrangement relieves this autoinhibition by means of a substrate-mimicking lid that covers the protein-substrate binding surface. Its function is as follows. Catalyzes specifically the acetylation of the epsilon-amino group of a highly conserved lysine residue in acetyl-CoA synthetase (ACS). This acetylation results in the inactivation of ACS activity and could be important for mycobacteria to adjust to environmental changes. In Mycobacterium tuberculosis (strain ATCC 25618 / H37Rv), this protein is Acetyltransferase Pat.